A 68-amino-acid chain; its full sequence is Metallothionein-3 (68 aa).

An N-acetylmethionine modification is found at Met-1. A beta region spans residues 1–30 (MDPETCPCPSGGSCTCADSCKCEGCKCTSC). A divalent metal cation contacts are provided by Cys-6, Cys-8, Cys-14, Cys-16, Cys-20, Cys-22, Cys-25, Cys-27, and Cys-30. The tract at residues 31-68 (KKSCCSCCPAECEKCAKDCVCKGGEAAEAEAEKCSCCQ) is alpha. Ser-33 is subject to Phosphoserine. 11 residues coordinate a divalent metal cation: Cys-34, Cys-35, Cys-37, Cys-38, Cys-42, Cys-45, Cys-49, Cys-51, Cys-64, Cys-66, and Cys-67.

It belongs to the metallothionein superfamily. Type 1 family. In terms of tissue distribution, abundant in a subset of astrocytes in the normal human brain, but greatly reduced in the Alzheimer disease (AD) brain.

Functionally, binds heavy metals. Contains three zinc and three copper atoms per polypeptide chain and only a negligible amount of cadmium. Inhibits survival and neurite formation of cortical neurons in vitro. In Homo sapiens (Human), this protein is Metallothionein-3 (MT3).